Here is a 150-residue protein sequence, read N- to C-terminus: UPF0178 protein AHA_0543 (150 aa).

It belongs to the UPF0178 family.

This Aeromonas hydrophila subsp. hydrophila (strain ATCC 7966 / DSM 30187 / BCRC 13018 / CCUG 14551 / JCM 1027 / KCTC 2358 / NCIMB 9240 / NCTC 8049) protein is UPF0178 protein AHA_0543.